The chain runs to 366 residues: tRNA/tmRNA (uracil-C(5))-methyltransferase (366 aa).

S-adenosyl-L-methionine contacts are provided by Gln-189, Tyr-217, Asn-222, Glu-238, and Asp-298. Cys-323 functions as the Nucleophile in the catalytic mechanism. The active-site Proton acceptor is Glu-357.

It belongs to the class I-like SAM-binding methyltransferase superfamily. RNA M5U methyltransferase family. TrmA subfamily.

The enzyme catalyses uridine(54) in tRNA + S-adenosyl-L-methionine = 5-methyluridine(54) in tRNA + S-adenosyl-L-homocysteine + H(+). The catalysed reaction is uridine(341) in tmRNA + S-adenosyl-L-methionine = 5-methyluridine(341) in tmRNA + S-adenosyl-L-homocysteine + H(+). Dual-specificity methyltransferase that catalyzes the formation of 5-methyluridine at position 54 (m5U54) in all tRNAs, and that of position 341 (m5U341) in tmRNA (transfer-mRNA). The sequence is that of tRNA/tmRNA (uracil-C(5))-methyltransferase from Shewanella putrefaciens (strain CN-32 / ATCC BAA-453).